The chain runs to 268 residues: MTSIKFYQSFSAHLVQHSPWPILVSFSLFNLAIGTVLTMHGYSHSSTTFDLGLAVTVGSILLWTRDIVIEGSFLGDHTKQVQEGLIIGFILFIISEVFAFISVFWAYFHSALSPAVELGSTWPPVGIIPLDTFSLPLFNTIILLSSGAFVTYGHHAIFSGKRLDSIIGLFLTVALALIFSYFQAFEYIHAGFSMSDSVFGTVFFASTGLHGIHVMLGTLFLFVSFLRQVNYQTTKEHNIGLETSILYWHFVDLVWLFLFLVVYFWGGA.

Helical transmembrane passes span 19 to 39 (PWPI…VLTM), 49 to 69 (FDLG…DIVI), 85 to 105 (LIIG…SVFW), 124 to 144 (PVGI…IILL), 165 to 185 (SIIG…FQAF), 202 to 222 (VFFA…LFLF), and 245 to 265 (ILYW…VYFW).

The protein belongs to the cytochrome c oxidase subunit 3 family. As to quaternary structure, component of the cytochrome c oxidase (complex IV, CIV), a multisubunit enzyme composed of a catalytic core of 3 subunits and several supernumerary subunits. The complex exists as a monomer or a dimer and forms supercomplexes (SCs) in the inner mitochondrial membrane with ubiquinol-cytochrome c oxidoreductase (cytochrome b-c1 complex, complex III, CIII).

The protein resides in the mitochondrion inner membrane. The enzyme catalyses 4 Fe(II)-[cytochrome c] + O2 + 8 H(+)(in) = 4 Fe(III)-[cytochrome c] + 2 H2O + 4 H(+)(out). Functionally, component of the cytochrome c oxidase, the last enzyme in the mitochondrial electron transport chain which drives oxidative phosphorylation. The respiratory chain contains 3 multisubunit complexes succinate dehydrogenase (complex II, CII), ubiquinol-cytochrome c oxidoreductase (cytochrome b-c1 complex, complex III, CIII) and cytochrome c oxidase (complex IV, CIV), that cooperate to transfer electrons derived from NADH and succinate to molecular oxygen, creating an electrochemical gradient over the inner membrane that drives transmembrane transport and the ATP synthase. Cytochrome c oxidase is the component of the respiratory chain that catalyzes the reduction of oxygen to water. Electrons originating from reduced cytochrome c in the intermembrane space (IMS) are transferred via the dinuclear copper A center (CU(A)) of subunit 2 and heme A of subunit 1 to the active site in subunit 1, a binuclear center (BNC) formed by heme A3 and copper B (CU(B)). The BNC reduces molecular oxygen to 2 water molecules using 4 electrons from cytochrome c in the IMS and 4 protons from the mitochondrial matrix. The chain is Cytochrome c oxidase subunit 3 (COIII) from Schizophyllum commune (Split gill fungus).